Reading from the N-terminus, the 202-residue chain is Phospholipase A2 inhibitor gamma subunit A (202 aa).

The N-terminal stretch at 1–19 (MKSLQIICLLFIFVARGSC) is a signal peptide. Intrachain disulfides connect cysteine 22–cysteine 47, cysteine 25–cysteine 32, cysteine 40–cysteine 68, cysteine 74–cysteine 95, cysteine 96–cysteine 101, cysteine 119–cysteine 144, cysteine 137–cysteine 166, and cysteine 170–cysteine 192.

The protein belongs to the CNF-like-inhibitor family. As to quaternary structure, heteromer composed of subunit A and subunit B. Expressed by the liver.

It is found in the secreted. Its function is as follows. Inhibits the enzymatic activity of the phospholipase A2 (PLA2). This chain is Phospholipase A2 inhibitor gamma subunit A, found in Elaphe climacophora (Japanese rat snake).